The following is a 274-amino-acid chain: Shikimate dehydrogenase (NADP(+)) (274 aa).

Residues 14-16 and threonine 61 each bind shikimate; that span reads SKS. Lysine 65 serves as the catalytic Proton acceptor. NADP(+) is bound at residue glutamate 77. Residues asparagine 86 and aspartate 102 each contribute to the shikimate site. Residues 126 to 130, 149 to 154, and methionine 212 each bind NADP(+); these read GAGGA and NRTLEK. Tyrosine 214 is a binding site for shikimate. Glycine 237 contacts NADP(+).

The protein belongs to the shikimate dehydrogenase family. As to quaternary structure, homodimer.

It catalyses the reaction shikimate + NADP(+) = 3-dehydroshikimate + NADPH + H(+). It functions in the pathway metabolic intermediate biosynthesis; chorismate biosynthesis; chorismate from D-erythrose 4-phosphate and phosphoenolpyruvate: step 4/7. Functionally, involved in the biosynthesis of the chorismate, which leads to the biosynthesis of aromatic amino acids. Catalyzes the reversible NADPH linked reduction of 3-dehydroshikimate (DHSA) to yield shikimate (SA). This Actinobacillus pleuropneumoniae serotype 5b (strain L20) protein is Shikimate dehydrogenase (NADP(+)).